The following is a 366-amino-acid chain: MIERTIETATKRYPLLLGDGAARVLPSLLRSLSCPPGTKLFIVTDDTVAPLYLDEVRALLAAAEYDVYAYVIPSGEAAKSFDHYYACQTAALQCGLDRRSVIIALGGGVVGDLAGFVAATYMRGIRYIQMPTTLLAHDSAVGGKVAINHPLGKNMIGAFHQPEAVVYDTSFLRTLPERELRSGFAEVIKHALIRDRRFYDWLRAEIKTLADLRGEKLAYCIEKGIDIKASVVREDEKETGVRAHLNFGHTLGHALESELGYGALTHGEAVAVGMLFAVFVSERFYGRSFAEHRLADWFAGYGFPVSLPTTVQTPRLLEKMKGDKKAYAGTVRMVLLCEIGDVEVVELEDDNLLTWLDEFARQGGKG.

NAD(+) is bound by residues 74 to 79 (SGEAAK), 108 to 112 (GVVGD), 132 to 133 (TT), Lys-144, Lys-153, and 171 to 174 (FLRT). The Zn(2+) site is built by Glu-186, His-249, and His-266.

Belongs to the sugar phosphate cyclases superfamily. Dehydroquinate synthase family. Requires Co(2+) as cofactor. Zn(2+) is required as a cofactor. It depends on NAD(+) as a cofactor.

The protein resides in the cytoplasm. The enzyme catalyses 7-phospho-2-dehydro-3-deoxy-D-arabino-heptonate = 3-dehydroquinate + phosphate. It participates in metabolic intermediate biosynthesis; chorismate biosynthesis; chorismate from D-erythrose 4-phosphate and phosphoenolpyruvate: step 2/7. Its function is as follows. Catalyzes the conversion of 3-deoxy-D-arabino-heptulosonate 7-phosphate (DAHP) to dehydroquinate (DHQ). The polypeptide is 3-dehydroquinate synthase (Geobacillus kaustophilus (strain HTA426)).